The primary structure comprises 119 residues: Protein GSKIP homolog (119 aa).

This sequence belongs to the GSKIP family.

The chain is Protein GSKIP homolog from Drosophila melanogaster (Fruit fly).